The chain runs to 573 residues: Poly(ribitol-phosphate) beta-N-acetylglucosaminyltransferase TarS (573 aa).

UDP-N-acetyl-alpha-D-glucosamine-binding positions include Pro-9, Asp-41, Asn-68, Arg-76, 92 to 94 (DSD), Arg-127, and Glu-178. Asp-94 is a binding site for Mn(2+). Asp-179 functions as the Proton acceptor in the catalytic mechanism. Residues Arg-207 and 211-213 (HMS) contribute to the UDP-N-acetyl-alpha-D-glucosamine site.

This sequence belongs to the glycosyltransferase 2 family. In terms of assembly, homotrimer. Mn(2+) is required as a cofactor.

The catalysed reaction is 4-O-[(D-ribitylphospho)(n)-di{(2R)-glycerylphospho}]-N-acetyl-beta-D-mannosaminyl-(1-&gt;4)-N-acetyl-alpha-D-glucosaminyl di-trans,octa-cis-undecaprenyl diphosphate + n UDP-N-acetyl-alpha-D-glucosamine = 4-O-([2-N-acetyl-beta-D-glucosaminyl-1-D-ribitylphospho](n)-di{[2R]-1-glycerylphospho})-N-acetyl-beta-D-mannosaminyl-(1-&gt;4)-N-acetyl-alpha-D-glucosaminyl di-trans,octa-cis-undecaprenyl diphosphate + n UDP + n H(+). Its pathway is cell wall biogenesis; poly(ribitol phosphate) teichoic acid biosynthesis. Attaches beta-O-GlcNAc (beta-O-N-acetyl-D-glucosamine) residues to the C4 position of poly(RboP)-wall teichoic acids (WTAs). Prefers UDP-GlcNAc as a donor substrate and is specific for poly(ribitol phosphate) WTAs. Can also use UDP-Glc and UDP-GalNAc, but not UDP-galactose or UDP-glucuronic acid. Mediates beta-lactam resistance in methicillin resistant Staphylococcus aureus (MRSA) strains. The protein is Poly(ribitol-phosphate) beta-N-acetylglucosaminyltransferase TarS of Staphylococcus aureus (strain MW2).